A 310-amino-acid polypeptide reads, in one-letter code: Putative S-adenosyl-L-methionine-dependent methyltransferase MMAR_0356 (310 aa).

Residues Asp-137 and 166-167 (DL) contribute to the S-adenosyl-L-methionine site.

The protein belongs to the UPF0677 family.

Exhibits S-adenosyl-L-methionine-dependent methyltransferase activity. The polypeptide is Putative S-adenosyl-L-methionine-dependent methyltransferase MMAR_0356 (Mycobacterium marinum (strain ATCC BAA-535 / M)).